The primary structure comprises 520 residues: GMP synthase [glutamine-hydrolyzing] (520 aa).

Residues 9 to 202 (TILIIDFGSQ…VHRIVGVKPG (194 aa)) enclose the Glutamine amidotransferase type-1 domain. Cys86 functions as the Nucleophile in the catalytic mechanism. Residues His176 and Glu178 contribute to the active site. Positions 203-395 (WTMGAYREQA…LGLPDSFIGR (193 aa)) constitute a GMPS ATP-PPase domain. An ATP-binding site is contributed by 230 to 236 (SGGVDSS).

Homodimer.

It catalyses the reaction XMP + L-glutamine + ATP + H2O = GMP + L-glutamate + AMP + diphosphate + 2 H(+). It functions in the pathway purine metabolism; GMP biosynthesis; GMP from XMP (L-Gln route): step 1/1. Its function is as follows. Catalyzes the synthesis of GMP from XMP. In Brucella melitensis biotype 2 (strain ATCC 23457), this protein is GMP synthase [glutamine-hydrolyzing].